A 1392-amino-acid chain; its full sequence is MEVLMAERANLVFHNKAINGTAMKRLISRLIDHFGMAYTSHILDQVKTLGFQQATATSISLGIDDLLTIPSKGWLVQDAEQQSLILEKHHHYGNVHAVEKLRQSIEIWYATSEYLRQEMNPNFRMTDPFNPVHIMSFSGARGNASQVHQLVGMRGLMSDPQGQMIDLPIQSNLREGLSLTEYIISCYGARKGVVDTAVRTSDAGYLTRRLVEVVQHIVVRRTDCGTARGISVSPRNGMMPERIFIQTLIGRVLADDIYMGPRCIATRNQDIGIGLVNRFITFRAQPISIRTPFTCRSTSWICRLCYGRSPTHGDLVELGEAVGIIAGQSIGEPGTQLTLRTFHTGGVFTGGTAEHVRAPSNGKIKFNEDLVHPTRTRHGHPAFLCSIDLYVTIESEDILHNVNIPPKSLLLVQNDQYVESEQVIAEIRAGISTLNFKEKVRKHIYSDSDGEMHWSTDVYHAPEFTYGNVHLLPKTSHLWILLGRPCRSSLVYLSIHKDQDQMNAHFLSGKRRYTSNLSVTNDQARQKLFSSDFSGKKEDRIPDYSDLNRIICAGQYNLVYSPILHENSDLLSKRRRNKFIIPLHSIQELENELMPCSGISIEIPVNGIFRRNSILAYFDDPRYRRKSSGIIKYGTVETHSVIKKEDLLEYRGVKEFRPKYQMKVDRFFFIPEEVHILPGSSSIMVRNNSIVGVDTQITLNLRSRVGGLVRVERKKKRIELKIFSGDIHFPGETDKISRHTGVLIPPGTGKRNSKESKKVKNWIYVQRITPSKKKFFVLVRPVVTYEITDGINLATLFPPDPLQERDNVQLRIVNYILYGNGKPIRGISDTSIQLVRTCLVLNWNQDKKSSSCEEARASFVEIRTNGLIRHFLRINLVKSPISYIGKRNDPSGSGLLSDNGSDCTNINPFSSIYSYSKAKIQQSINQPQGTIHTLLNRNKECQSLIILSAANCSRMGPFKDVKYHSVIKKSIKKDPLIPIRNSLGPLGTSLPIENFYSSYHLITHNQILVTNYLQLDNLKQTFQVIKFKYYLMDENGKIFNPDPCRNIILNPFNLNWYFLHHNYCEETSKIISLGQFICENVCIAKNGPPLKSGQVILVQVDSIVIRSAKPYLATPGATVHGHYGETLYEGDTLVTFIYEKSRSGDITQGLPKVEQVLEVRSVDSISMNLEKRIEGWNKCITRILGIPWGFLIGAELTIAQSRISLVNKIQQVYRSQGVQIHNRHLEIIVRQITSKVLVSEDGMSNVFSPGELIGLLRAERMGRALEEAICYRVVLLGITRASLNTQSFISEASFQETARVLAKAALRGRIDWLKGLKENVVLGGVIPVGTGFKGLVHPSKQHNNIPLETKKKNLFEGEMRDILFHHKKLFDSCLSKNFHDIPEQSFIGFNDS.

Residues Cys-224, Cys-295, Cys-302, and Cys-305 each coordinate Zn(2+).

This sequence belongs to the RNA polymerase beta' chain family. RpoC2 subfamily. In terms of assembly, in plastids the minimal PEP RNA polymerase catalytic core is composed of four subunits: alpha, beta, beta', and beta''. When a (nuclear-encoded) sigma factor is associated with the core the holoenzyme is formed, which can initiate transcription. Zn(2+) is required as a cofactor.

Its subcellular location is the plastid. The protein resides in the chloroplast. It carries out the reaction RNA(n) + a ribonucleoside 5'-triphosphate = RNA(n+1) + diphosphate. In terms of biological role, DNA-dependent RNA polymerase catalyzes the transcription of DNA into RNA using the four ribonucleoside triphosphates as substrates. This Nicotiana sylvestris (Wood tobacco) protein is DNA-directed RNA polymerase subunit beta''.